The primary structure comprises 341 residues: MSKDIKILAIESSCDETAAAVVVNGRDVLSNVIASQIDIHTKFGGVVPEVASRKHIEAIGIVVKEALEEANVTFDDIDAIGVTYGPGLVGALLVGVQYAKSLAYALKKPLIGVNHIEGHISANFIQYKDLKPPFVCLVVSGGHTFIVHMKDYGEFDILGETRDDAAGEAFDKVARAIGLGYPGGPKIDKISNEGNENAIVFPKANFHDKDCLDFSFSGVKSAVLNYINKMNMKNEEINRADVAASFQKSVVDVLVDNVIKACKLRNVDKIAIAGGVASNTHLREAMINAGKKNKIDVLFPAPILCTDNAAMIGSAAYFEYLKGRVAPLELNAIPNLKLGER.

Positions 115 and 119 each coordinate Fe cation. Substrate is bound by residues 138–142 (VVSGG), Asp171, Gly184, Asp188, and Asn279. A Fe cation-binding site is contributed by Asp307.

This sequence belongs to the KAE1 / TsaD family. It depends on Fe(2+) as a cofactor.

It localises to the cytoplasm. The enzyme catalyses L-threonylcarbamoyladenylate + adenosine(37) in tRNA = N(6)-L-threonylcarbamoyladenosine(37) in tRNA + AMP + H(+). In terms of biological role, required for the formation of a threonylcarbamoyl group on adenosine at position 37 (t(6)A37) in tRNAs that read codons beginning with adenine. Is involved in the transfer of the threonylcarbamoyl moiety of threonylcarbamoyl-AMP (TC-AMP) to the N6 group of A37, together with TsaE and TsaB. TsaD likely plays a direct catalytic role in this reaction. The chain is tRNA N6-adenosine threonylcarbamoyltransferase from Clostridium novyi (strain NT).